Here is a 261-residue protein sequence, read N- to C-terminus: Ribosomal RNA small subunit methyltransferase J (261 aa).

S-adenosyl-L-methionine-binding positions include 109 to 110, 125 to 126, and D179; these read RD and ER.

The protein belongs to the methyltransferase superfamily. RsmJ family.

The protein localises to the cytoplasm. The enzyme catalyses guanosine(1516) in 16S rRNA + S-adenosyl-L-methionine = N(2)-methylguanosine(1516) in 16S rRNA + S-adenosyl-L-homocysteine + H(+). Its function is as follows. Specifically methylates the guanosine in position 1516 of 16S rRNA. The sequence is that of Ribosomal RNA small subunit methyltransferase J from Pseudomonas paraeruginosa (strain DSM 24068 / PA7) (Pseudomonas aeruginosa (strain PA7)).